We begin with the raw amino-acid sequence, 386 residues long: Succinate--CoA ligase [ADP-forming] subunit beta (386 aa).

Residues 9–244 (KAVLRSYGVS…LDEEDAKEIE (236 aa)) enclose the ATP-grasp domain. ATP-binding positions include lysine 46, 53 to 55 (GRG), glutamate 99, cysteine 102, and glutamate 107. Mg(2+) contacts are provided by asparagine 199 and aspartate 213. Residues asparagine 264 and 321–323 (GIM) each bind substrate.

It belongs to the succinate/malate CoA ligase beta subunit family. Heterotetramer of two alpha and two beta subunits. It depends on Mg(2+) as a cofactor.

The enzyme catalyses succinate + ATP + CoA = succinyl-CoA + ADP + phosphate. The catalysed reaction is GTP + succinate + CoA = succinyl-CoA + GDP + phosphate. It functions in the pathway carbohydrate metabolism; tricarboxylic acid cycle; succinate from succinyl-CoA (ligase route): step 1/1. Its function is as follows. Succinyl-CoA synthetase functions in the citric acid cycle (TCA), coupling the hydrolysis of succinyl-CoA to the synthesis of either ATP or GTP and thus represents the only step of substrate-level phosphorylation in the TCA. The beta subunit provides nucleotide specificity of the enzyme and binds the substrate succinate, while the binding sites for coenzyme A and phosphate are found in the alpha subunit. The sequence is that of Succinate--CoA ligase [ADP-forming] subunit beta from Bacillus thuringiensis (strain Al Hakam).